Reading from the N-terminus, the 287-residue chain is Inorganic pyrophosphatase (287 aa).

Diphosphate is bound at residue R80. Mg(2+) is bound by residues D117, D122, and D154.

The protein belongs to the PPase family. Mg(2+) is required as a cofactor.

It localises to the cytoplasm. It catalyses the reaction diphosphate + H2O = 2 phosphate + H(+). The chain is Inorganic pyrophosphatase (IPP1) from Yarrowia lipolytica (strain CLIB 122 / E 150) (Yeast).